A 136-amino-acid polypeptide reads, in one-letter code: Ig kappa chain V-V region MOPC 21 (136 aa).

Residues 1–29 (MHQTSMGIKMESHTLVFISILLCLYGADG) form the signal peptide. Positions 30-52 (NIVMTQSPKSMSMSVGERVTLTC) are framework-1. The interval 53–63 (KASENVVTYVS) is complementarity-determining-1. Residues 64 to 78 (WYQQKPEQSPKLLIY) are framework-2. Positions 79 to 85 (GASNRYT) are complementarity-determining-2. The tract at residues 86 to 117 (GVPDRFTGSGSATDFTLTISSVQAEDLADYHC) is framework-3. The tract at residues 118-126 (GQGYSYPYT) is complementarity-determining-3. The segment at 127-136 (FGGGTKLEIK) is framework-4.

This Mus musculus (Mouse) protein is Ig kappa chain V-V region MOPC 21.